The following is a 186-amino-acid chain: Interferon beta-3 (186 aa).

The N-terminal stretch at 1 to 21 (MTYRCLLPMVLLLCFSTTALS) is a signal peptide. A disulfide bond links cysteine 52 and cysteine 161. N-linked (GlcNAc...) asparagine glycans are attached at residues asparagine 131 and asparagine 173.

The protein belongs to the alpha/beta interferon family. In terms of assembly, monomer.

The protein localises to the secreted. Its function is as follows. Has antiviral, antibacterial and anticancer activities. The chain is Interferon beta-3 (IFNB3) from Bos taurus (Bovine).